The primary structure comprises 439 residues: MNALAYLDLPHIRQARGLAALPGSKSISNRVLLIAALAEGRTEISGLLDSDDTRVMLAALRQLGVAVTDLGQGRVAVEGARRFPAEKAELFLGNAGTAFRPLTAALALMGGDYRLSGVPRMHERPIGDLVDALRAWGARIDYLGQAGYPPLHIGRGDIRADRVRVQGSVSSQFLTALLLAAPIEAGASGRPVTIEVIGELISKPYIEITLNLMARYGVNVVRDGWRAFTIEGDARYRSPGSIAVEGDASTASYLLALGVLGGGPVRVTGVGEQSIQGDTAFADTLAAMGANITKGSDWIEASGQAVAEGGRIKAFDADFNLIPDAAMTAATMALFADGPCRLRNIGSWRVKETDRIHAMHTELAKLGAKVESGPDWLSLTPPADSDWRDAHIGTWDDHRMAMCFSLAAFGPAAVRILDPGCVSKTFPDYFDVYAGLVSA.

Residues Lys-25, Ser-26, and Arg-30 each coordinate 3-phosphoshikimate. Lys-25 contacts phosphoenolpyruvate. Residues Gly-96 and Arg-124 each coordinate phosphoenolpyruvate. 3-phosphoshikimate contacts are provided by Ser-170, Ser-171, Gln-172, Ser-202, Asp-324, and Lys-351. Gln-172 is a binding site for phosphoenolpyruvate. Asp-324 (proton acceptor) is an active-site residue. Residues Arg-355, Arg-399, and Lys-424 each contribute to the phosphoenolpyruvate site.

This sequence belongs to the EPSP synthase family. In terms of assembly, monomer.

The protein localises to the cytoplasm. The catalysed reaction is 3-phosphoshikimate + phosphoenolpyruvate = 5-O-(1-carboxyvinyl)-3-phosphoshikimate + phosphate. Its pathway is metabolic intermediate biosynthesis; chorismate biosynthesis; chorismate from D-erythrose 4-phosphate and phosphoenolpyruvate: step 6/7. Catalyzes the transfer of the enolpyruvyl moiety of phosphoenolpyruvate (PEP) to the 5-hydroxyl of shikimate-3-phosphate (S3P) to produce enolpyruvyl shikimate-3-phosphate and inorganic phosphate. The chain is 3-phosphoshikimate 1-carboxyvinyltransferase from Bordetella avium (strain 197N).